The chain runs to 214 residues: RNA-free ribonuclease P (214 aa).

It belongs to the HARP family.

The enzyme catalyses Endonucleolytic cleavage of RNA, removing 5'-extranucleotides from tRNA precursor.. In terms of biological role, RNA-free RNase P that catalyzes the removal of the 5'-leader sequence from pre-tRNA to produce the mature 5'-terminus. This is RNA-free ribonuclease P from Aeropyrum pernix (strain ATCC 700893 / DSM 11879 / JCM 9820 / NBRC 100138 / K1).